Reading from the N-terminus, the 969-residue chain is Protein translocase subunit SecA (969 aa).

ATP is bound by residues glutamine 99, 117-121 (GEGKT), and aspartate 631.

The protein belongs to the SecA family. In terms of assembly, monomer and homodimer. Part of the essential Sec protein translocation apparatus which comprises SecA, SecYEG and auxiliary proteins SecDF. Other proteins may also be involved.

It localises to the cell inner membrane. Its subcellular location is the cytoplasm. The enzyme catalyses ATP + H2O + cellular proteinSide 1 = ADP + phosphate + cellular proteinSide 2.. Part of the Sec protein translocase complex. Interacts with the SecYEG preprotein conducting channel. Has a central role in coupling the hydrolysis of ATP to the transfer of proteins into and across the cell membrane, serving as an ATP-driven molecular motor driving the stepwise translocation of polypeptide chains across the membrane. This chain is Protein translocase subunit SecA, found in Chlamydia trachomatis serovar L2 (strain ATCC VR-902B / DSM 19102 / 434/Bu).